The following is a 148-amino-acid chain: [Ribosomal protein bS18]-alanine N-acetyltransferase (148 aa).

Residues Asn2 to Ser147 enclose the N-acetyltransferase domain. Acetyl-CoA-binding positions include Ile69–Val71 and Arg77–Arg82. The Proton acceptor role is filled by Glu103. Asn108 serves as a coordination point for acetyl-CoA. Catalysis depends on Tyr115, which acts as the Proton donor.

The protein belongs to the acetyltransferase family. RimI subfamily.

Its subcellular location is the cytoplasm. It catalyses the reaction N-terminal L-alanyl-[ribosomal protein bS18] + acetyl-CoA = N-terminal N(alpha)-acetyl-L-alanyl-[ribosomal protein bS18] + CoA + H(+). Its function is as follows. Acetylates the N-terminal alanine of ribosomal protein bS18. This Salmonella typhimurium (strain LT2 / SGSC1412 / ATCC 700720) protein is [Ribosomal protein bS18]-alanine N-acetyltransferase.